The chain runs to 155 residues: 1,4-dihydroxy-2-naphthoyl-CoA hydrolase (155 aa).

The active site involves D27.

It belongs to the 4-hydroxybenzoyl-CoA thioesterase family. DHNA-CoA hydrolase subfamily.

It carries out the reaction 1,4-dihydroxy-2-naphthoyl-CoA + H2O = 1,4-dihydroxy-2-naphthoate + CoA + H(+). Its pathway is cofactor biosynthesis; phylloquinone biosynthesis. The protein operates within quinol/quinone metabolism; 1,4-dihydroxy-2-naphthoate biosynthesis; 1,4-dihydroxy-2-naphthoate from chorismate: step 7/7. Catalyzes the hydrolysis of 1,4-dihydroxy-2-naphthoyl-CoA (DHNA-CoA) to 1,4-dihydroxy-2-naphthoate (DHNA), a reaction involved in phylloquinone (vitamin K1) biosynthesis. This chain is 1,4-dihydroxy-2-naphthoyl-CoA hydrolase, found in Prochlorococcus marinus (strain NATL2A).